The chain runs to 107 residues: EPIDERMAL PATTERNING FACTOR-like protein 3 (107 aa).

The first 24 residues, 1–24, serve as a signal peptide directing secretion; the sequence is MEYMFLLMSKFFFVFPIIIYIGPA. Cystine bridges form between Cys-64/Cys-102, Cys-68/Cys-74, and Cys-71/Cys-104.

It belongs to the plant cysteine rich small secretory peptide family. Epidermal patterning factor subfamily.

Its subcellular location is the secreted. In terms of biological role, controls stomatal patterning. The chain is EPIDERMAL PATTERNING FACTOR-like protein 3 from Arabidopsis thaliana (Mouse-ear cress).